The following is a 518-amino-acid chain: D-aminopeptidase (518 aa).

Serine 62 serves as the catalytic Nucleophile. The Proton donor/acceptor role is filled by lysine 65. A disordered region spans residues 373-392 (FGTGPEKMDISGENEAQSSM). The important for specificity stretch occupies residues 477–487 (QRSMDAPSPGE). A substrate-binding site is contributed by aspartate 481.

The protein belongs to the peptidase S12 family. As to quaternary structure, homodimer.

It catalyses the reaction Release of an N-terminal D-amino acid from a peptide, Xaa-|-Yaa-, in which Xaa is preferably D-Ala, D-Ser or D-Thr. D-amino acid amides and methyl esters also are hydrolyzed, as is glycine amide.. With respect to regulation, inhibited by beta-lactam compounds such as 6-aminopenicillic acid, 7-aminocephalosporanic acid, benzylpenicillin and ampicillin. Inhibited by p-chloromercuribenzoate. Its function is as follows. Hydrolyzes N-terminal residues in D-amino acid-containing peptides. The sequence is that of D-aminopeptidase from Brucella melitensis biotype 1 (strain ATCC 23456 / CCUG 17765 / NCTC 10094 / 16M).